We begin with the raw amino-acid sequence, 491 residues long: MKERKVIIKTGLNLENSYTSLPEIFFTRQSPSRVPSPKLAVLNYPLITSLGLNAQVLQSADGVDILAGNKIPEEAIPIAQAYAGHQFAHFTMLGDGRALLLGEHITPLGDRFDIQLKGSGKTPYSRGGDGKAALGPMLREYIISEAMNALGIPTTRSLAVVTTGELIMREAELPGAILTRVAASHIRVGTFEYVSRWGTVEELRALADYTLQRHFKKGYDKENPYLFLLQEVIKKQAELIAKWQLVGFVHGVMNTDNMTISGETIDYGPCAFMDVYNPKTVFSSIDIYGRYAYGNQPNIAAWNLARLAETLLPLLNINPNEAIKIAENAVSDFTKLYKNNWLSGMRAKLGIFNEEFQDEYLIEDLLSIMHKYGADYTNTFRALTFDNIEDTVLFDKMEFDKWYKLWQERLTRQEESKLSSKQLMKSSNPSVIPRNHRVEEALEAAVKEGDYSVMEKLLEALSKPYAYSKEQDYYSKLPEPSTCPYQTYCGT.

Residues Gly94, Gly96, Arg97, Lys117, Asp129, Gly130, Arg180, and Arg187 each contribute to the ATP site. The active-site Proton acceptor is Asp256. Positions 257 and 266 each coordinate Mg(2+). ATP is bound at residue Asp266.

The protein belongs to the SELO family. Mg(2+) serves as cofactor. The cofactor is Mn(2+).

It carries out the reaction L-seryl-[protein] + ATP = 3-O-(5'-adenylyl)-L-seryl-[protein] + diphosphate. It catalyses the reaction L-threonyl-[protein] + ATP = 3-O-(5'-adenylyl)-L-threonyl-[protein] + diphosphate. The catalysed reaction is L-tyrosyl-[protein] + ATP = O-(5'-adenylyl)-L-tyrosyl-[protein] + diphosphate. The enzyme catalyses L-histidyl-[protein] + UTP = N(tele)-(5'-uridylyl)-L-histidyl-[protein] + diphosphate. It carries out the reaction L-seryl-[protein] + UTP = O-(5'-uridylyl)-L-seryl-[protein] + diphosphate. It catalyses the reaction L-tyrosyl-[protein] + UTP = O-(5'-uridylyl)-L-tyrosyl-[protein] + diphosphate. Its function is as follows. Nucleotidyltransferase involved in the post-translational modification of proteins. It can catalyze the addition of adenosine monophosphate (AMP) or uridine monophosphate (UMP) to a protein, resulting in modifications known as AMPylation and UMPylation. In Clostridium botulinum (strain 657 / Type Ba4), this protein is Protein nucleotidyltransferase YdiU.